Consider the following 347-residue polypeptide: Very-long-chain 3-oxoacyl-CoA reductase (347 aa).

Residues 20-40 traverse the membrane as a helical segment; that stretch reads LLWVVFGLGVLKCTTLSLRFL. Positions 120, 147, 223, 227, 256, and 258 each coordinate NADP(+). The active-site Proton donor is the Tyr223. Residue Lys227 is the Lowers pKa of active site Tyr of the active site.

It belongs to the short-chain dehydrogenases/reductases (SDR) family. In terms of assembly, interacts with the fatty acid elongation system components ELO3 and TSC13.

The protein localises to the endoplasmic reticulum membrane. It catalyses the reaction a very-long-chain (3R)-3-hydroxyacyl-CoA + NADP(+) = a very-long-chain 3-oxoacyl-CoA + NADPH + H(+). The catalysed reaction is 3-oxooctadecanoyl-CoA + NADPH + H(+) = (3R)-hydroxyoctadecanoyl-CoA + NADP(+). It carries out the reaction 3-oxoeicosanoyl-CoA + NADPH + H(+) = (3R)-hydroxyeicosanoyl-CoA + NADP(+). The enzyme catalyses 3-oxodocosanoyl-CoA + NADPH + H(+) = (3R)-hydroxydocosanoyl-CoA + NADP(+). It catalyses the reaction 3-oxotetracosanoyl-CoA + NADPH + H(+) = (3R)-hydroxytetracosanoyl-CoA + NADP(+). The catalysed reaction is 3-oxohexacosanoyl-CoA + NADPH + H(+) = (3R)-hydroxyhexacosanoyl-CoA + NADP(+). The protein operates within lipid metabolism; fatty acid biosynthesis. In terms of biological role, component of the microsomal membrane bound fatty acid elongation system, which produces the 26-carbon very long-chain fatty acids (VLCFA) from palmitate. Catalyzes the reduction of the 3-ketoacyl-CoA intermediate that is formed in each cycle of fatty acid elongation. VLCFAs serve as precursors for ceramide and sphingolipids. The chain is Very-long-chain 3-oxoacyl-CoA reductase (IFA38) from Saccharomyces cerevisiae (strain ATCC 204508 / S288c) (Baker's yeast).